The sequence spans 335 residues: Pregnancy-specific beta-1-glycoprotein 2 (335 aa).

Residues 1-34 form the signal peptide; sequence MGPLSAPPCTEHIKWKGLLVTASLLNFWNLPTTA. An Ig-like V-type domain is found at 35–144; sequence QVTIEAQPPK…TGYFTFTLYL (110 aa). 4 N-linked (GlcNAc...) asparagine glycosylation sites follow: asparagine 61, asparagine 104, asparagine 111, and asparagine 199. Ig-like C2-type domains lie at 147–234 and 239–317; these read PKPS…VTLN and PDLP…TSLT. 2 disulfides stabilise this stretch: cysteine 169–cysteine 217 and cysteine 261–cysteine 301.

This sequence belongs to the immunoglobulin superfamily. CEA family.

It localises to the secreted. The polypeptide is Pregnancy-specific beta-1-glycoprotein 2 (PSG2) (Homo sapiens (Human)).